The following is a 291-amino-acid chain: tRNA pseudouridine synthase-like 1 (291 aa).

D66 (nucleophile) is an active-site residue. Y130 contributes to the substrate binding site.

This sequence belongs to the tRNA pseudouridine synthase TruA family.

It catalyses the reaction a uridine in tRNA = a pseudouridine in tRNA. The polypeptide is tRNA pseudouridine synthase-like 1 (Pusl1) (Mus musculus (Mouse)).